A 382-amino-acid polypeptide reads, in one-letter code: Lipid-A-disaccharide synthase (382 aa).

Belongs to the LpxB family.

It carries out the reaction 2-N,3-O-bis[(3R)-3-hydroxytetradecanoyl]-alpha-D-glucosaminyl 1-phosphate + UDP-2-N,3-O-bis[(3R)-3-hydroxytetradecanoyl]-alpha-D-glucosamine = lipid A disaccharide (E. coli) + UDP + H(+). The catalysed reaction is a lipid X + a UDP-2-N,3-O-bis[(3R)-3-hydroxyacyl]-alpha-D-glucosamine = a lipid A disaccharide + UDP + H(+). It participates in glycolipid biosynthesis; lipid IV(A) biosynthesis; lipid IV(A) from (3R)-3-hydroxytetradecanoyl-[acyl-carrier-protein] and UDP-N-acetyl-alpha-D-glucosamine: step 5/6. Condensation of UDP-2,3-diacylglucosamine and 2,3-diacylglucosamine-1-phosphate to form lipid A disaccharide, a precursor of lipid A, a phosphorylated glycolipid that anchors the lipopolysaccharide to the outer membrane of the cell. The chain is Lipid-A-disaccharide synthase from Escherichia coli (strain K12 / MC4100 / BW2952).